Consider the following 448-residue polypeptide: Asparagine--tRNA ligase (448 aa).

This sequence belongs to the class-II aminoacyl-tRNA synthetase family. In terms of assembly, homodimer.

It localises to the cytoplasm. The enzyme catalyses tRNA(Asn) + L-asparagine + ATP = L-asparaginyl-tRNA(Asn) + AMP + diphosphate + H(+). In Streptococcus thermophilus (strain ATCC BAA-491 / LMD-9), this protein is Asparagine--tRNA ligase.